Consider the following 163-residue polypeptide: SKP1-like protein 3 (163 aa).

Residues 105–163 (LRAANYLNISGLLDLTCKAVADQMRGKTPAQMREHFNIKNDYTPEEEAEVRNENRWAFE) are interaction with the F-box domain of F-box proteins.

The protein belongs to the SKP1 family. As to quaternary structure, part of a SCF (SKP1-cullin-F-box) protein ligase complex. Interacts with ADO3/FKF1 and At3g61590. In terms of tissue distribution, highly expressed in siliques.

The protein localises to the nucleus. It functions in the pathway protein modification; protein ubiquitination. In terms of biological role, involved in ubiquitination and subsequent proteasomal degradation of target proteins. Together with CUL1, RBX1 and a F-box protein, it forms a SCF E3 ubiquitin ligase complex. The functional specificity of this complex depends on the type of F-box protein. In the SCF complex, it serves as an adapter that links the F-box protein to CUL1. This is SKP1-like protein 3 (ASK3) from Arabidopsis thaliana (Mouse-ear cress).